The sequence spans 506 residues: 2,3-bisphosphoglycerate-independent phosphoglycerate mutase (506 aa).

Residues D13 and S63 each contribute to the Mn(2+) site. S63 (phosphoserine intermediate) is an active-site residue. Substrate-binding positions include H124, 153–154, R183, R189, 254–257, and K330; these read RD and RADR. D396, H400, D437, H438, and H456 together coordinate Mn(2+).

This sequence belongs to the BPG-independent phosphoglycerate mutase family. As to quaternary structure, monomer. Mn(2+) serves as cofactor.

The catalysed reaction is (2R)-2-phosphoglycerate = (2R)-3-phosphoglycerate. It participates in carbohydrate degradation; glycolysis; pyruvate from D-glyceraldehyde 3-phosphate: step 3/5. Its function is as follows. Catalyzes the interconversion of 2-phosphoglycerate and 3-phosphoglycerate. The sequence is that of 2,3-bisphosphoglycerate-independent phosphoglycerate mutase from Cereibacter sphaeroides (strain ATCC 17029 / ATH 2.4.9) (Rhodobacter sphaeroides).